The chain runs to 354 residues: Probable L-ascorbate-6-phosphate lactonase UlaG (354 aa).

Belongs to the UlaG family. A divalent metal cation is required as a cofactor.

It is found in the cytoplasm. The enzyme catalyses L-ascorbate 6-phosphate + H2O = 3-dehydro-L-gulonate 6-phosphate. It functions in the pathway cofactor degradation; L-ascorbate degradation; D-xylulose 5-phosphate from L-ascorbate: step 1/4. Probably catalyzes the hydrolysis of L-ascorbate-6-P into 3-keto-L-gulonate-6-P. Is essential for L-ascorbate utilization under anaerobic conditions. This chain is Probable L-ascorbate-6-phosphate lactonase UlaG, found in Salmonella heidelberg (strain SL476).